We begin with the raw amino-acid sequence, 75 residues long: Mitochondrial import receptor subunit TOM7-1 (75 aa).

At Met1 the chain carries N-acetylmethionine. The tract at residues 1 to 28 is disordered; it reads MESTISLKVNKGKGKGSKGASSSDDKSK. The Cytoplasmic segment spans residues 1-46; sequence MESTISLKVNKGKGKGSKGASSSDDKSKFDVVKEWTNWSLKKAKVV. A helical transmembrane segment spans residues 47–64; that stretch reads THYGFIPLVIFVGMNSDP. At 65–75 the chain is on the mitochondrial intermembrane side; sequence KPHLFQLLSPV.

It belongs to the Tom7 family. Forms part of the preprotein translocase complex of the outer mitochondrial membrane (TOM complex) which consists of at least 6 different proteins (TOM5, TOM6, TOM7, TOM20, TOM22/TOM9 and TOM40). In terms of tissue distribution, expressed in roots, flowers, young cotyledons and leaves.

It localises to the mitochondrion outer membrane. Functionally, seems to act as a modulator of the dynamics of the mitochondrial protein transport machinery. Seems to promote the dissociation of subunits of the outer membrane translocase. In Arabidopsis thaliana (Mouse-ear cress), this protein is Mitochondrial import receptor subunit TOM7-1 (TOM7-1).